Reading from the N-terminus, the 502-residue chain is Maturase K (502 aa).

It belongs to the intron maturase 2 family. MatK subfamily.

Its subcellular location is the plastid. The protein resides in the chloroplast. Its function is as follows. Usually encoded in the trnK tRNA gene intron. Probably assists in splicing its own and other chloroplast group II introns. This Cephalotaxus fortunei (Chinese plum-yew) protein is Maturase K.